A 333-amino-acid chain; its full sequence is DNA-directed RNA polymerase subunit alpha (333 aa).

The segment at 1–246 is alpha N-terminal domain (alpha-NTD); that stretch reads MEKFIKINWT…AHLNIIGDVN (246 aa). The segment at 263 to 333 is alpha C-terminal domain (alpha-CTD); sequence HSKTQNILIQ…YNVFLDKGEE (71 aa).

Belongs to the RNA polymerase alpha chain family. As to quaternary structure, homodimer. The RNAP catalytic core consists of 2 alpha, 1 beta, 1 beta' and 1 omega subunit. When a sigma factor is associated with the core the holoenzyme is formed, which can initiate transcription.

The catalysed reaction is RNA(n) + a ribonucleoside 5'-triphosphate = RNA(n+1) + diphosphate. Its function is as follows. DNA-dependent RNA polymerase catalyzes the transcription of DNA into RNA using the four ribonucleoside triphosphates as substrates. In Mycoplasma mobile (strain ATCC 43663 / 163K / NCTC 11711) (Mesomycoplasma mobile), this protein is DNA-directed RNA polymerase subunit alpha.